The primary structure comprises 373 residues: ATP phosphoribosyltransferase regulatory subunit (373 aa).

It belongs to the class-II aminoacyl-tRNA synthetase family. HisZ subfamily. Heteromultimer composed of HisG and HisZ subunits.

It is found in the cytoplasm. It functions in the pathway amino-acid biosynthesis; L-histidine biosynthesis; L-histidine from 5-phospho-alpha-D-ribose 1-diphosphate: step 1/9. In terms of biological role, required for the first step of histidine biosynthesis. May allow the feedback regulation of ATP phosphoribosyltransferase activity by histidine. The chain is ATP phosphoribosyltransferase regulatory subunit from Rhizobium etli (strain ATCC 51251 / DSM 11541 / JCM 21823 / NBRC 15573 / CFN 42).